The following is a 365-amino-acid chain: Caffeic acid 3-O-methyltransferase (365 aa).

130–136 (MNQDKVL) contributes to the substrate binding site. Residues 162 to 180 (AFEYHGTDPRFNKVFNRGM) are substrate binding. S-adenosyl-L-methionine contacts are provided by G208, D231, D251, M252, and K265. The active-site Proton acceptor is the H269.

The protein belongs to the class I-like SAM-binding methyltransferase superfamily. Cation-independent O-methyltransferase family. COMT subfamily. Homodimer.

The catalysed reaction is (E)-caffeate + S-adenosyl-L-methionine = (E)-ferulate + S-adenosyl-L-homocysteine + H(+). Its pathway is aromatic compound metabolism; phenylpropanoid biosynthesis. Its function is as follows. Catalyzes the conversion of caffeic acid to ferulic acid and of 5-hydroxyferulic acid to sinapic acid. The resulting products may subsequently be converted to the corresponding alcohols that are incorporated into lignins. The sequence is that of Caffeic acid 3-O-methyltransferase (COMT1) from Prunus dulcis (Almond).